A 200-amino-acid polypeptide reads, in one-letter code: Superoxide dismutase [Mn] (200 aa).

His27, His77, Asp160, and His164 together coordinate Mn(2+).

Belongs to the iron/manganese superoxide dismutase family. As to quaternary structure, homodimer. Mn(2+) serves as cofactor.

The enzyme catalyses 2 superoxide + 2 H(+) = H2O2 + O2. Destroys superoxide anion radicals which are normally produced within the cells and which are toxic to biological systems. The protein is Superoxide dismutase [Mn] (sodB) of Rhizobium meliloti (strain 1021) (Ensifer meliloti).